A 155-amino-acid chain; its full sequence is SsrA-binding protein (155 aa).

It belongs to the SmpB family.

Its subcellular location is the cytoplasm. In terms of biological role, required for rescue of stalled ribosomes mediated by trans-translation. Binds to transfer-messenger RNA (tmRNA), required for stable association of tmRNA with ribosomes. tmRNA and SmpB together mimic tRNA shape, replacing the anticodon stem-loop with SmpB. tmRNA is encoded by the ssrA gene; the 2 termini fold to resemble tRNA(Ala) and it encodes a 'tag peptide', a short internal open reading frame. During trans-translation Ala-aminoacylated tmRNA acts like a tRNA, entering the A-site of stalled ribosomes, displacing the stalled mRNA. The ribosome then switches to translate the ORF on the tmRNA; the nascent peptide is terminated with the 'tag peptide' encoded by the tmRNA and targeted for degradation. The ribosome is freed to recommence translation, which seems to be the essential function of trans-translation. This is SsrA-binding protein from Bordetella bronchiseptica (strain ATCC BAA-588 / NCTC 13252 / RB50) (Alcaligenes bronchisepticus).